A 713-amino-acid chain; its full sequence is Polyribonucleotide nucleotidyltransferase (713 aa).

2 residues coordinate Mg(2+): D491 and D497. In terms of domain architecture, KH spans 558–617 (PRMITIKINPEKIRDVIGKGGSVIRALTEETGTTIDISDDGVVTIASTSSDGMAEAKKRI). The S1 motif domain occupies 627 to 695 (GQVYEGTVLK…EKGRVRLSAK (69 aa)).

The protein belongs to the polyribonucleotide nucleotidyltransferase family. Mg(2+) serves as cofactor.

The protein localises to the cytoplasm. It catalyses the reaction RNA(n+1) + phosphate = RNA(n) + a ribonucleoside 5'-diphosphate. Functionally, involved in mRNA degradation. Catalyzes the phosphorolysis of single-stranded polyribonucleotides processively in the 3'- to 5'-direction. The protein is Polyribonucleotide nucleotidyltransferase of Burkholderia cenocepacia (strain ATCC BAA-245 / DSM 16553 / LMG 16656 / NCTC 13227 / J2315 / CF5610) (Burkholderia cepacia (strain J2315)).